Here is a 175-residue protein sequence, read N- to C-terminus: Protein FLOWERING LOCUS T (175 aa).

The protein belongs to the phosphatidylethanolamine-binding protein family. In terms of assembly, interacts with FD/BZIP14 and FDP/BZIP27. Interacts with FTIP1/MCTP1 in phloem companion cells. Interacts with NAKR1. Mostly localized in leaves vasculature.

The protein resides in the cytoplasm. The protein localises to the nucleus. It localises to the endoplasmic reticulum. Component of the mobile flower-promoting signal (floral stimulus or florigen). Promotes the transition from vegetative growth to flowering. Required for 'SEPALLATA3' (SEP3) and 'FRUITFULL' (FUL) accumulation in mature rosette leaves. Seems to acts in parallel with 'LEAFY' to induce flowering by regulating 'APETALA1'. Translated in leaves and then transported to the shoot apical meristem where it activates the transcription of several floral meristem identity genes. May play a role in both the autonomous and the long-day flowering pathways. This chain is Protein FLOWERING LOCUS T, found in Arabidopsis thaliana (Mouse-ear cress).